We begin with the raw amino-acid sequence, 386 residues long: Ferredoxin--NADP reductase (386 aa).

Residues 9–67 (SRMFRYEVVGLRQTAETEKTNYAIRNSGSQFFNVPYDRMNQFMQQITRWGGKIVSIQPL) form the CpcD-like domain. The FAD-binding FR-type domain occupies 104 to 228 (NNPCIGKVIS…TGPVGKEMLL (125 aa)). FAD contacts are provided by residues 163 to 166 (RLYS), 184 to 186 (CVR), tyrosine 190, 202 to 204 (VCS), and threonine 243. 2 residues coordinate NADP(+): serine 166 and arginine 186. NADP(+) is bound by residues threonine 243, 275-276 (VA), 305-306 (SR), 315-319 (KMYIQ), 344-345 (GL), and glutamate 384.

It belongs to the ferredoxin--NADP reductase type 1 family. FAD is required as a cofactor.

Its subcellular location is the cellular thylakoid membrane. The catalysed reaction is 2 reduced [2Fe-2S]-[ferredoxin] + NADP(+) + H(+) = 2 oxidized [2Fe-2S]-[ferredoxin] + NADPH. This Thermosynechococcus vestitus (strain NIES-2133 / IAM M-273 / BP-1) protein is Ferredoxin--NADP reductase (petH).